A 376-amino-acid chain; its full sequence is Gibberellic acid methyltransferase 1 (376 aa).

S-adenosyl-L-homocysteine is bound by residues Tyr22, Cys64, Asn69, Asp104, Leu105, Ser136, and Phe137. Trp158 lines the gibberellin A9 pocket. The Mg(2+) site is built by Asn175, Val179, Arg265, Asp266, Phe268, and Asn269.

The protein belongs to the methyltransferase superfamily. Type-7 methyltransferase family. SABATH subfamily. It depends on Mg(2+) as a cofactor. As to expression, expressed in siliques, developing seeds, anthers and germinating seeds. Not detected in leaves, stems, flowers and roots.

The catalysed reaction is gibberellin A9 + S-adenosyl-L-methionine = O-methyl gibberellin A9 + S-adenosyl-L-homocysteine. With respect to regulation, up-regulated by K(+) and NH(4+), down-regulated by Zn(2+), Cu(2+), Fe(2+) and Fe(3+). In terms of biological role, methylates the carboxyl group of several gibberellins (GAs). Substrate preference is GA9 &gt; GA20 &gt; GA3 &gt; GA4 &gt; GA34 &gt; GA51 &gt; GA1 &gt; GA19 &gt; GA12. No activity with diterpenes abietic acid and ent-kaurenoic acid. This chain is Gibberellic acid methyltransferase 1 (GAMT1), found in Arabidopsis thaliana (Mouse-ear cress).